A 547-amino-acid chain; its full sequence is Chaperonin GroEL (547 aa).

ATP-binding positions include 30 to 33 (TLGP), K51, 87 to 91 (DGTTT), G415, 479 to 481 (NAA), and D495. A disordered region spans residues 525–547 (PKEDKPDLGGGNPGGAGGMGGMM). Gly residues predominate over residues 532 to 547 (LGGGNPGGAGGMGGMM).

Belongs to the chaperonin (HSP60) family. As to quaternary structure, forms a cylinder of 14 subunits composed of two heptameric rings stacked back-to-back. Interacts with the co-chaperonin GroES.

It is found in the cytoplasm. It carries out the reaction ATP + H2O + a folded polypeptide = ADP + phosphate + an unfolded polypeptide.. Functionally, together with its co-chaperonin GroES, plays an essential role in assisting protein folding. The GroEL-GroES system forms a nano-cage that allows encapsulation of the non-native substrate proteins and provides a physical environment optimized to promote and accelerate protein folding. The polypeptide is Chaperonin GroEL (Blochmanniella floridana).